Consider the following 1058-residue polypeptide: MKSMDDRTVGLISASSSRASLKIQPEIGYPRICDYCQPIIELMTASEFARHIRQDHTTKEGGSFLCRYGEHGVCQKLPLEGVCDLDFEAHIRRCHTSSQPAGYSSPTSSLVASYTEDSEETASLRSIRLTSDRDTPTIEKKKFTLHSFTQNLSAVLADPSRSRSDLTTFFTRHWGDSFVPTQPVPQSKRLARLADSAFDSYCQSAGESYRRYQAIKRALRLSHADGGVGIGDERQDAEDLPTIFIDPRFTLGDSSTFSDVFTVPANDDLDALKQTLSGRNVIPATPLEIATNRKPGEFRDYEALQNRLEMMHDVVDGRLAGKLVAKTDDFWQVVRSYSGLQEQLANALQCVMVVRKNLKRVDELVCDQSKKIVEVHERYEQKKKLLAKLHDISCLREAQSTVQMMLSQGDYPKAIECIETSLDVLSKELNGVTCFRHLASQLRELYTVIGRMMNEDFASLIQKELGVKPEAGTMIQAEGELSAVLLGLMRMRKYSFIAVLREEIIEGVKSVMRQVIKNQILNNGVDLNDFDPSLTQLGEPVRRMKHADFLKTVKAVMDEEFYFCKRLEALQDILLETVERANPLHRHGSEDIIVERIEEAKDIHESESDDEVGTTFSKSASSGGFSVGGSALSSNASATTLLSIEVRSEAFLRHVLPLIAEFGHQCAQQRISRLLIARAKNASVTEATTPTQLSECIKLVKEFQSKCDKEGWYSTQNQKVGGLGRSVNKLSMDYIEKFHAARKIRIGNMLDTELWKATDVSIVDQNIVDMAMETGQLRNTKRIDDGPIKKSFKRTESAVTIDSTTSTSNQIQGVIVDEENYVVVGSSITMIQLLSDYCEAISEMPSFSQDWNSRVVELLKTFNSRCCQLILGAGALQLVGLKTISVRNLALAGRSLELVCRFIPMVHDEMDRVLPENRKSLLRYFKQVESEYRDHVNEIAAKLISVIAHYTTNCLGMWDVKGVIPSPEFQQICRHMLKFHNGLVGIMPRDQIEALFRQVHENFKANLREHVTGMGITPHDPLKYGYVTKDYMFYQQNVKNMESCRNLELESLNDIMFE.

A coiled-coil region spans residues Ser-369–Leu-389.

The protein belongs to the VPS54 family. In terms of assembly, component of the Golgi-associated retrograde protein (GARP) complex, also called VFT (VPS fifty-three) complex, composed of vps-51, vps-52, vps-53 and vps-54. Within the complex interacts with vps-52 and vps-53.

It localises to the golgi apparatus. It is found in the trans-Golgi network. In terms of biological role, acts as a component of the GARP complex that is involved in retrograde transport from early and late endosomes to the trans-Golgi network (TGN). The GARP complex facilitates tethering as well as SNARE complex assembly at the Golgi. The protein is Vacuolar protein sorting-associated protein 54 of Caenorhabditis elegans.